A 649-amino-acid chain; its full sequence is tRNA-guanine(15) transglycosylase (649 aa).

Catalysis depends on Asp-88, which acts as the Nucleophile. Substrate is bound by residues Asp-123 and Ala-194. Residues Cys-280, Cys-282, and Cys-285 each contribute to the Zn(2+) site. Positions 573 to 648 constitute a PUA domain; sequence KYRIVIDSSV…VAATLRGGLK (76 aa).

Belongs to the archaeosine tRNA-ribosyltransferase family. The cofactor is Zn(2+).

The enzyme catalyses guanosine(15) in tRNA + 7-cyano-7-deazaguanine = 7-cyano-7-carbaguanosine(15) in tRNA + guanine. The protein operates within tRNA modification; archaeosine-tRNA biosynthesis. Functionally, exchanges the guanine residue with 7-cyano-7-deazaguanine (preQ0) at position 15 in the dihydrouridine loop (D-loop) of archaeal tRNAs. The chain is tRNA-guanine(15) transglycosylase from Methanococcus maripaludis (strain DSM 14266 / JCM 13030 / NBRC 101832 / S2 / LL).